The chain runs to 476 residues: MGQLHFFFFPVMAHGHMIPTLDMAKLFASRGVKATIITTPLNEFVFSKAIQRNKHLGIEIEIRLIKFPAVENGLPEECERLDQIPSDEKLPNFFKAVAMMQEPLEQLIEECRPDCLISDMFLPWTTDTAAKFNIPRIVFHGTSFFALCVENSVRLNKPFKNVSSDSETFVVPDLPHEIKLTRTQVSPFERSGEETAMTRMIKTVRESDSKSYGVVFNSFYELETDYVEHYTKVLGRRAWAIGPLSMCNRDIEDKAERGKKSSIDKHECLKWLDSKKPSSVVYVCFGSVANFTASQLHELAMGIEASGQEFIWVVRTELDNEDWLPEGFEERTKEKGLIIRGWAPQVLILDHESVGAFVTHCGWNSTLEGVSGGVPMVTWPVFAEQFFNEKLVTEVLKTGAGVGSIQWKRSASEGVKREAIAKAIKRVMVSEEADGFRNRAKAYKEMARKAIEEGGSSYTGLTTLLEDISTYSSTGH.

His16 (proton acceptor) is an active-site residue. An anthocyanidin is bound at residue His16. Asp119 (charge relay) is an active-site residue. UDP-alpha-D-glucose is bound by residues Ala343, Gln345, His360, Trp363, Asn364, Ser365, and Glu368. An anthocyanidin is bound at residue Ala383. Residues Glu384 and Gln385 each coordinate UDP-alpha-D-glucose.

This sequence belongs to the UDP-glycosyltransferase family.

The enzyme catalyses scopoletin + UDP-alpha-D-glucose = scopolin + UDP + H(+). Glucosyltransferase acting preferentially on aromatic substrates of the phenylpropanoid types. The best substrates are scopoletin and esculetin. Required for full resistance to virus. This is Scopoletin glucosyltransferase (TOGT1) from Nicotiana tabacum (Common tobacco).